A 1274-amino-acid polypeptide reads, in one-letter code: Meiosis inhibitor protein 1 (1274 aa).

As to expression, expressed predominantly in testis. Weakly expressed in spleen and thymus. Expressed in the ovaries, Fallopian tubes and uterus.

Its function is as follows. Required for normal meiotic chromosome synapsis. May be involved in the formation of meiotic double-strand breaks (DSBs) in spermatocytes. This Homo sapiens (Human) protein is Meiosis inhibitor protein 1.